The following is a 417-amino-acid chain: uncharacterized protein (417 aa).

To M.tuberculosis Rv2067c.

This is an uncharacterized protein from Synechococcus sp. (strain ATCC 27144 / PCC 6301 / SAUG 1402/1) (Anacystis nidulans).